A 276-amino-acid polypeptide reads, in one-letter code: 2-dehydro-3-deoxyphosphooctonate aldolase (276 aa).

The protein belongs to the KdsA family.

Its subcellular location is the cytoplasm. The catalysed reaction is D-arabinose 5-phosphate + phosphoenolpyruvate + H2O = 3-deoxy-alpha-D-manno-2-octulosonate-8-phosphate + phosphate. Its pathway is carbohydrate biosynthesis; 3-deoxy-D-manno-octulosonate biosynthesis; 3-deoxy-D-manno-octulosonate from D-ribulose 5-phosphate: step 2/3. It functions in the pathway bacterial outer membrane biogenesis; lipopolysaccharide biosynthesis. The polypeptide is 2-dehydro-3-deoxyphosphooctonate aldolase (Xanthomonas oryzae pv. oryzae (strain MAFF 311018)).